Consider the following 357-residue polypeptide: GPI mannosyltransferase 2 (357 aa).

8 helical membrane passes run 6–26 (TLIV…LVVP), 86–106 (AIAY…ALML), 128–148 (ILSP…FALL), 167–187 (VLGA…PFLF), 201–221 (GVSV…TQYL), 257–277 (YWTA…YLMY), 286–306 (LVPF…MWHV), and 334–354 (YVVR…GAYL).

It belongs to the PIGV family.

It localises to the endoplasmic reticulum membrane. The protein operates within glycolipid biosynthesis; glycosylphosphatidylinositol-anchor biosynthesis. Functionally, mannosyltransferase involved in glycosylphosphatidylinositol-anchor biosynthesis. Transfers the second mannose to the glycosylphosphatidylinositol during GPI precursor assembly. This is GPI mannosyltransferase 2 (GPI18) from Yarrowia lipolytica (strain CLIB 122 / E 150) (Yeast).